The chain runs to 102 residues: Ribosomal silencing factor RsfS (102 aa).

It belongs to the Iojap/RsfS family. As to quaternary structure, interacts with ribosomal protein uL14 (rplN).

The protein resides in the cytoplasm. Functions as a ribosomal silencing factor. Interacts with ribosomal protein uL14 (rplN), blocking formation of intersubunit bridge B8. Prevents association of the 30S and 50S ribosomal subunits and the formation of functional ribosomes, thus repressing translation. The chain is Ribosomal silencing factor RsfS from Haemophilus influenzae (strain ATCC 51907 / DSM 11121 / KW20 / Rd).